The chain runs to 426 residues: COP9 signalosome complex subunit 6 (426 aa).

The 142-residue stretch at 14 to 155 folds into the MPN domain; it reads VLLHPLVIMQ…AGTTRKLPLF (142 aa). The tract at residues 320-426 is disordered; the sequence is PVRFKSQHLG…NESDESSQAS (107 aa). Over residues 334–347 the composition is skewed to acidic residues; that stretch reads ADDDDYFDDEDLEN.

This sequence belongs to the peptidase M67A family. CSN6 subfamily. As to quaternary structure, component of the CSN complex, probably composed of csn-1, csn-2, csn-3, csn-4, csn-5, csn-6 and csn-7. Within the complex it probably interacts directly with csn-2 and csn-4. Interacts with rbx-1.

The protein localises to the cytoplasm. It is found in the nucleus. Component of the COP9 signalosome complex (CSN), a complex involved in various cellular and developmental processes. The CSN complex is an essential regulator of the ubiquitin (Ubl) conjugation pathway by mediating the deneddylation of the cullin subunits of the SCF-type E3 ligase complexes, leading to decrease the Ubl ligase activity of SCF. The CSN complex plays an essential role in embryogenesis and oogenesis and is required to regulate microtubule stability in the early embryo. Mediates mei-3/katanin targeting for degradation at the meiosis to mitosis transition via deneddylation of cul-3. The chain is COP9 signalosome complex subunit 6 (csn-6) from Caenorhabditis elegans.